A 1014-amino-acid chain; its full sequence is MPVYRIRGVDVDFPYDAYDCQITYMDRVLESLQQGKNALLESPTGTGKTLCLLCSALAWRRTFGEFLRGGGGGGGGGGGGGGGGSQQPPYGSQPSGSQHSGGSASQSSRYPVIIYASRTHSQLRQVIKELKATSYRPKMAVLGSREQMCIHEEVSKLRGRQQNNACHYLCKKRWCRHHNSVAEFMRNNSELGSEACDIEDLVNIGRTKGPCPYYISRELSKSVDILFAPYNYLIDPGNRRSLNGIPWDNAVLIFDEAHNLESICADAASFDLLPNNLSSCIAEAQECIQLCSAKRTFENSADKQFDPENYAILKALLMALEKKISEVVIDSKELGHTKPGNYIYEFLSELNITSETSKKLIDTIDGASLLLEEGNSAETGPGMKAKATVCRLETIRDILDIIFRGGGQSHAKYYRFHVNECQQNSGDALKVLGKVSRTLSWWCFNPGLAMEEFLKLGVRSIILTSGTLSPLDSLALELNLEFPVRLENPHVIASDQIWVGVVPVGPSGHPLNSSYRTRETLKYKQELGITIVNFARIVPDGLLVFFPSYSMMDKCINCWKDRNHENSSDEHTIWQRICKHKQPVIEPRQSSNFPNAIEDYAAKLRDSSTTGAIFFAVCRGKVSEGLDFADRAGRAVIVTGMPFATPTDPKVRLKRDYLDKLGSASNKNSKALTGEEWYVQQAARAVNQAVGRVIRHRHDYGAIIYCDERFVWQNYQSQMSYWLRPYIKCYKKYGEVVQGLTRFFRDKVSIDSSKPNETDFNDNIVLLADKHKPQETISALAVTTANENQRTALSVNPTTKRSNYIKFAQITPANRSTLSMKHGCSSTSQLLYSGDKLSTDAQVIDLAADVATSHLAGYRFKSLGPKKAKVMVGSKDVCFDDGSPKLQHNVESRALAGCLGEQSTASSKKSNITHAPGNSGAIHEKSGGQESNAGPAFLKLAREKLSTAEYRDFVEYMKALKLKTMHIKDSLDAIAKLFSSPERLPLLEGFRVFVPKNHLSLYEQLVQSYTVPNT.

The Helicase ATP-binding domain occupies 7–308; the sequence is RGVDVDFPYD…NSADKQFDPE (302 aa). 42-49 contributes to the ATP binding site; that stretch reads SPTGTGKT. Residues 70–85 show a composition bias toward gly residues; sequence GGGGGGGGGGGGGGGS. Positions 70-106 are disordered; that stretch reads GGGGGGGGGGGGGGGSQQPPYGSQPSGSQHSGGSASQ. The span at 86-106 shows a compositional bias: low complexity; it reads QQPPYGSQPSGSQHSGGSASQ. Residues Cys-149, Cys-170, Cys-175, and Cys-211 each coordinate [4Fe-4S] cluster. Residues 255-258 carry the DEAH box motif; sequence DEAH. Residues 906–930 form a disordered region; it reads SSKKSNITHAPGNSGAIHEKSGGQE.

Belongs to the helicase family. RAD3/XPD subfamily.

Its subcellular location is the nucleus. It carries out the reaction ATP + H2O = ADP + phosphate + H(+). Its function is as follows. A probable ATP-dependent DNA helicase implicated in DNA replication, DNA repair and the maintenance of genomic stability. Acts as an anti-recombinase to counteract toxic recombination and limit crossover during meiosis. Regulates meiotic recombination and crossover homeostasis by physically dissociating strand invasion events and thereby promotes noncrossover repair by meiotic synthesis dependent strand annealing (SDSA) as well as disassembly of D loop recombination intermediates. The sequence is that of Regulator of telomere elongation helicase 1 homolog from Oryza sativa subsp. japonica (Rice).